The sequence spans 137 residues: Large ribosomal subunit protein uL16 (137 aa).

This sequence belongs to the universal ribosomal protein uL16 family. As to quaternary structure, part of the 50S ribosomal subunit.

Functionally, binds 23S rRNA and is also seen to make contacts with the A and possibly P site tRNAs. This is Large ribosomal subunit protein uL16 from Acinetobacter baylyi (strain ATCC 33305 / BD413 / ADP1).